The following is a 614-amino-acid chain: FAD-linked oxidoreductase ffsJ (614 aa).

An N-terminal signal peptide occupies residues 1-19; sequence MRLTRALTPAILALPAAHA. N-linked (GlcNAc...) asparagine glycosylation is found at asparagine 30, asparagine 53, asparagine 72, and asparagine 114. Residues 119-301 form the FAD-binding PCMH-type domain; the sequence is TGSLPAYYID…LSSTHRVEPE (183 aa). N-linked (GlcNAc...) asparagine glycans are attached at residues asparagine 314, asparagine 329, asparagine 461, asparagine 465, asparagine 478, and asparagine 514. The segment at 453 to 495 is disordered; the sequence is NGHGRSNNNNSNNSSTSTSTSTSSKNGSVKPYAYGGKETTSST. Positions 456–480 are enriched in low complexity; it reads GRSNNNNSNNSSTSTSTSTSSKNGS.

It belongs to the oxygen-dependent FAD-linked oxidoreductase family. FAD serves as cofactor.

The protein operates within mycotoxin biosynthesis. FAD-linked oxidoreductase; part of the gene cluster that mediates the biosynthesis of the cytotoxic leucine-containing cytochalasans, including aspochalasin C, aspochalasin E, TMC-169, flavichalasine F, aspergillin PZ, aspochalasin M and flavichalasine G. The first step in the pathway is catalyzed by the hybrid PKS-NRPS ffsA that utilizes 8 units of malonyl-CoA to iteratively assemble the octaketide chain before addition of L-leucine by the C-terminal NRPS modules. Because ffsA lacks a designated enoylreductase (ER) domain, the required activity is provided the enoyl reductase fssC. The methyltransferase (MT) domain of ffsA catalyzes the alpha-methylation at C10 and C14 using S-adenosyl-L-methionine as the methyl-donating cosubstrate. Reduction by the hydrolyase ffsE, followed by dehydration and intra-molecular Diels-Alder cyclization by the Diels-Alderase ffsF then yield the required isoindolone-fused macrocycle. A number of oxidative steps catalyzed by the tailoring cytochrome P450 monooxygenase ffsD, the FAD-linked oxidoreductase ffsJ and the short-chain dehydrogenase/reductase ffsI, are further required to afford the final products. In Aspergillus flavipes, this protein is FAD-linked oxidoreductase ffsJ.